We begin with the raw amino-acid sequence, 312 residues long: Olfactory receptor 1D5 (312 aa).

Residues 1 to 25 lie on the Extracellular side of the membrane; sequence MDGDNQSENSQFLLLGISESPEQQQ. The N-linked (GlcNAc...) asparagine glycan is linked to asparagine 5. The helical transmembrane segment at 26–49 threads the bilayer; it reads ILFWMFLSMYLVTVLGNVLIILAI. Topologically, residues 50–57 are cytoplasmic; the sequence is SSDSRLHT. A helical transmembrane segment spans residues 58–79; that stretch reads PMYFFLANLSFTDLFFVTNTIP. Over 80 to 100 the chain is Extracellular; it reads KMLVNLQSQNKAISYAGCLTQ. A disulfide bridge connects residues cysteine 97 and cysteine 189. Residues 101 to 120 form a helical membrane-spanning segment; sequence LYFLVSLVTLDNLILAVMAY. The Cytoplasmic portion of the chain corresponds to 121–140; sequence DRYVAICCPLHYVTAMSPGL. The helical transmembrane segment at 141 to 158 threads the bilayer; that stretch reads CVLLLSLCWGLSVFYGLL. Residues 159–196 lie on the Extracellular side of the membrane; sequence LTLLLTRVTFCGPREIHYLFCDMYILLRLACSNTHIIH. The chain crosses the membrane as a helical span at residues 197–220; sequence TVLVATGCFIFLTPLGFMTTSYVR. The Cytoplasmic portion of the chain corresponds to 221–237; it reads IVRTILQIPSASKKYKA. The helical transmembrane segment at 238–260 threads the bilayer; the sequence is FSTCASHLGVVSLFYGTLAMVYL. Topologically, residues 261–271 are extracellular; the sequence is QPLHTYSMKDS. The chain crosses the membrane as a helical span at residues 272–291; that stretch reads VATVMYAVVTPMMNPFIHSL. The Cytoplasmic segment spans residues 292–312; sequence RNKDMHGALGRVLRRLFQRPK.

This sequence belongs to the G-protein coupled receptor 1 family.

Its subcellular location is the cell membrane. Odorant receptor. The polypeptide is Olfactory receptor 1D5 (OR1D5) (Pan troglodytes (Chimpanzee)).